The chain runs to 164 residues: Protein SprT (164 aa).

One can recognise a SprT-like domain in the interval 14 to 156 (QQAETFFKRP…LCKRCRAILV (143 aa)). Histidine 69 provides a ligand contact to Zn(2+). Glutamate 70 is a catalytic residue. Histidine 73 lines the Zn(2+) pocket.

Belongs to the SprT family. The cofactor is Zn(2+).

The protein resides in the cytoplasm. This chain is Protein SprT, found in Pseudomonas putida (strain GB-1).